The chain runs to 582 residues: Formate--tetrahydrofolate ligase (582 aa).

Residue 65–72 (TPLGEGKT) participates in ATP binding.

It belongs to the formate--tetrahydrofolate ligase family.

It carries out the reaction (6S)-5,6,7,8-tetrahydrofolate + formate + ATP = (6R)-10-formyltetrahydrofolate + ADP + phosphate. It participates in one-carbon metabolism; tetrahydrofolate interconversion. This is Formate--tetrahydrofolate ligase from Vibrio cholerae serotype O1 (strain ATCC 39315 / El Tor Inaba N16961).